The sequence spans 125 residues: Multifunctional methyltransferase subunit TRM112-like protein (125 aa).

The TRM112 domain maps to 2–121 (KLFVHNFMSS…RDGIPNMLKV (120 aa)).

The protein belongs to the TRM112 family.

The protein resides in the nucleus. The protein localises to the nucleoplasm. Its subcellular location is the cytoplasm. It localises to the perinuclear region. In terms of biological role, acts as an activator of both RNA and protein methyltransferases. This is Multifunctional methyltransferase subunit TRM112-like protein from Caenorhabditis elegans.